A 367-amino-acid polypeptide reads, in one-letter code: Aspartate-semialdehyde dehydrogenase (367 aa).

Residues 10 to 13, 37 to 38, and Gln-73 each bind NADP(+); these read RGMV and TS. Arg-102 is a binding site for phosphate. Residue Cys-135 is the Acyl-thioester intermediate of the active site. Cys-135 carries the post-translational modification S-cysteinyl cysteine; in inhibited form. Substrate is bound at residue Gln-162. Residues 165-169, Arg-173, and Pro-193 each bind NADP(+); that span reads SGGGA. Position 241 (Glu-241) interacts with substrate. Lys-244 lines the phosphate pocket. Arg-267 contributes to the substrate binding site. His-274 acts as the Proton acceptor in catalysis. Gln-350 contributes to the NADP(+) binding site.

Belongs to the aspartate-semialdehyde dehydrogenase family. Homodimer.

It catalyses the reaction L-aspartate 4-semialdehyde + phosphate + NADP(+) = 4-phospho-L-aspartate + NADPH + H(+). It functions in the pathway amino-acid biosynthesis; L-lysine biosynthesis via DAP pathway; (S)-tetrahydrodipicolinate from L-aspartate: step 2/4. The protein operates within amino-acid biosynthesis; L-methionine biosynthesis via de novo pathway; L-homoserine from L-aspartate: step 2/3. It participates in amino-acid biosynthesis; L-threonine biosynthesis; L-threonine from L-aspartate: step 2/5. Is inhibited by L- and D-cystine, and by other cystine derivatives, via the formation of a covalently bound cysteine at the active site Cys-135. Catalyzes the NADPH-dependent formation of L-aspartate-semialdehyde (L-ASA) by the reductive dephosphorylation of L-aspartyl-4-phosphate. This Escherichia coli (strain K12) protein is Aspartate-semialdehyde dehydrogenase.